We begin with the raw amino-acid sequence, 296 residues long: Small ribosomal subunit protein uS2 (296 aa).

Residues 246–272 (QAKDGSVVDSGKGKSIAAHKGGGKASK) are disordered.

It belongs to the universal ribosomal protein uS2 family.

The protein is Small ribosomal subunit protein uS2 of Anaplasma phagocytophilum (strain HZ).